We begin with the raw amino-acid sequence, 57 residues long: Large ribosomal subunit protein bL33 (57 aa).

Belongs to the bacterial ribosomal protein bL33 family.

In Shewanella amazonensis (strain ATCC BAA-1098 / SB2B), this protein is Large ribosomal subunit protein bL33.